The sequence spans 122 residues: ATP-dependent Clp protease adapter protein ClpS (122 aa).

The interval 1 to 33 is disordered; the sequence is MHAPSQIRLTFNQDHPEPHEHEDEGAGLAVQES. The span at 14–24 shows a compositional bias: basic and acidic residues; that stretch reads DHPEPHEHEDE.

Belongs to the ClpS family. As to quaternary structure, binds to the N-terminal domain of the chaperone ClpA.

Its function is as follows. Involved in the modulation of the specificity of the ClpAP-mediated ATP-dependent protein degradation. The polypeptide is ATP-dependent Clp protease adapter protein ClpS (Pseudomonas aeruginosa (strain ATCC 15692 / DSM 22644 / CIP 104116 / JCM 14847 / LMG 12228 / 1C / PRS 101 / PAO1)).